Reading from the N-terminus, the 313-residue chain is D-apiose import binding protein (313 aa).

The N-terminal stretch at 1–26 (MKLTRRLTLAAFASALALGTAMPAFA) is a signal peptide. Residues asparagine 39, 115-116 (DR), 162-164 (DTN), arginine 168, asparagine 218, aspartate 243, and glutamine 263 each bind D-apiofuranose.

It belongs to the bacterial solute-binding protein 2 family.

It is found in the periplasm. In terms of biological role, part of an ABC transporter complex involved in D-apiose import. Binds D-apiose, D-ribose and D-ribulose. This chain is D-apiose import binding protein, found in Rhizobium etli (strain ATCC 51251 / DSM 11541 / JCM 21823 / NBRC 15573 / CFN 42).